The primary structure comprises 246 residues: D-erythrulose reductase (246 aa).

13–41 provides a ligand contact to NADP(+); the sequence is LVTGAGKGIGRAVAVALCKAGARVTALSR. Position 138 (Ser138) interacts with substrate. The active-site Proton acceptor is the Tyr151. NADP(+) is bound at residue Lys155.

The protein belongs to the short-chain dehydrogenases/reductases (SDR) family. In terms of assembly, homotetramer. In terms of processing, the N-terminus is blocked. In terms of tissue distribution, highly expressed in kidney, and also found in high amounts in liver and testis. Low expression seen in all other tissues tested.

It localises to the cytoplasm. It catalyses the reaction D-threitol + NADP(+) = D-erythrulose + NADPH + H(+). The enzyme catalyses xylitol + NADP(+) = L-xylulose + NADPH + H(+). Functionally, catalyzes the reduction of D-erythrulose to D-threitol with the concomitant oxidation of NAD(P)H to NAD(P)(+). NADH is less effective than NADPH. May also catalyze the reduction of L-xylulose. The chain is D-erythrulose reductase (DER) from Gallus gallus (Chicken).